We begin with the raw amino-acid sequence, 200 residues long: GTP cyclohydrolase 1 (200 aa).

Residues Cys87, His90, and Cys158 each coordinate Zn(2+).

Belongs to the GTP cyclohydrolase I family. In terms of assembly, toroid-shaped homodecamer, composed of two pentamers of five dimers.

The catalysed reaction is GTP + H2O = 7,8-dihydroneopterin 3'-triphosphate + formate + H(+). It participates in cofactor biosynthesis; 7,8-dihydroneopterin triphosphate biosynthesis; 7,8-dihydroneopterin triphosphate from GTP: step 1/1. The polypeptide is GTP cyclohydrolase 1 (Xanthomonas axonopodis pv. citri (strain 306)).